A 493-amino-acid chain; its full sequence is Galactose-1-phosphate uridylyltransferase (493 aa).

Belongs to the galactose-1-phosphate uridylyltransferase type 2 family.

The protein localises to the cytoplasm. It carries out the reaction alpha-D-galactose 1-phosphate + UDP-alpha-D-glucose = alpha-D-glucose 1-phosphate + UDP-alpha-D-galactose. It participates in carbohydrate metabolism; galactose metabolism. This is Galactose-1-phosphate uridylyltransferase from Streptococcus thermophilus (strain CNRZ 1066).